A 430-amino-acid chain; its full sequence is 3-deoxy-D-manno-octulosonic acid transferase (430 aa).

The helical; Signal-anchor transmembrane segment at Ala12–His32 threads the bilayer. Glu66 functions as the Proton acceptor in the catalytic mechanism. CMP-binding positions include Pro274–Arg275, Met314–Ile316, and Asn341–Glu344.

This sequence belongs to the glycosyltransferase group 1 family. Glycosyltransferase 30 subfamily.

The protein resides in the cell inner membrane. It carries out the reaction lipid IVA (E. coli) + CMP-3-deoxy-beta-D-manno-octulosonate = alpha-Kdo-(2-&gt;6)-lipid IVA (E. coli) + CMP + H(+). The enzyme catalyses alpha-Kdo-(2-&gt;6)-lipid IVA (E. coli) + CMP-3-deoxy-beta-D-manno-octulosonate = alpha-Kdo-(2-&gt;4)-alpha-Kdo-(2-&gt;6)-lipid IVA (E. coli) + CMP + H(+). It catalyses the reaction alpha-Kdo-(2-&gt;4)-alpha-Kdo-(2-&gt;6)-lipid IVA (E. coli) + CMP-3-deoxy-beta-D-manno-octulosonate = alpha-Kdo-(2-&gt;8)-alpha-Kdo-(2-&gt;4)-alpha-Kdo-(2-&gt;6)-lipid IVA (E. coli) + CMP + H(+). Its pathway is bacterial outer membrane biogenesis; LPS core biosynthesis. Involved in lipopolysaccharide (LPS) biosynthesis. Catalyzes the transfer of three 3-deoxy-D-manno-octulosonate (Kdo) residues from CMP-Kdo to lipid IV(A), the tetraacyldisaccharide-1,4'-bisphosphate precursor of lipid A. Thus generates the genus-specific LPS epitope of Chlamydia, composed of the trisaccharide alpha-Kdo-(2-&gt;8)-alpha-Kdo-(2-&gt;4)-alpha-Kdo. This chain is 3-deoxy-D-manno-octulosonic acid transferase (waaA), found in Chlamydia muridarum (strain MoPn / Nigg).